Here is a 20-residue protein sequence, read N- to C-terminus: Protease inhibitor (20 aa).

In terms of assembly, monomer. Post-translationally, glycosylated. As to expression, stored in epidermis and secreted into the hemolymph and cuticle. Not detected in the interior of the epidermis, fat body cells or columnar or goblet cells of the midgut epithelium (at protein level).

Inhibits trypsin and chymotrypsin. In Antheraea mylitta (Tasar silkworm), this protein is Protease inhibitor.